The primary structure comprises 505 residues: Buccalin (505 aa).

The N-terminal stretch at 1–25 is a signal peptide; sequence MAHHRGHRHILLYVSLALSLGLALA. Residues 26–62 constitute a propeptide that is removed on maturation; it reads EDATDPSDDTGSFDDVEAVSEEADLDPYSMSQELNKR. At V74 the chain carries Valine amide. Leucine amide is present on residues L88 and L102. Pyrrolidone carboxylic acid is present on Q106. I116 carries the isoleucine amide modification. Residues L129, L143, L157, L171, L185, L199, L213, L227, L241, L254, L267, L281, L294, L307, L321, and L335 each carry the leucine amide modification. E349 is modified (glutamic acid 1-amide). 6 positions are modified to leucine amide: L363, L377, L391, L405, L419, and L433. Isoleucine amide occurs at positions 447 and 461. Q465 bears the Pyrrolidone carboxylic acid mark. The tract at residues 472 to 505 is disordered; that stretch reads SGRLGKRSSSEQEEEDVRQVEKRSTTEEQSSKSL. L475 bears the Leucine amide mark. Residues 488-505 show a composition bias toward basic and acidic residues; it reads VRQVEKRSTTEEQSSKSL. The propeptide occupies 495–505; the sequence is STTEEQSSKSL.

Cholinergic motor neuron B15 innervating buccal muscles in Aplysia.

The protein resides in the secreted. Its function is as follows. Modulatory neuropeptide, acting presynaptically on nerve terminals to inhibit acetylcholine release. This is Buccalin from Aplysia californica (California sea hare).